A 438-amino-acid chain; its full sequence is Argininosuccinate lyase (438 aa).

The protein belongs to the lyase 1 family. Argininosuccinate lyase subfamily.

Its subcellular location is the cytoplasm. It carries out the reaction 2-(N(omega)-L-arginino)succinate = fumarate + L-arginine. It participates in amino-acid biosynthesis; L-arginine biosynthesis; L-arginine from L-ornithine and carbamoyl phosphate: step 3/3. This chain is Argininosuccinate lyase, found in Clostridium tetani (strain Massachusetts / E88).